The chain runs to 689 residues: Glycine--tRNA ligase beta subunit (689 aa).

Belongs to the class-II aminoacyl-tRNA synthetase family. As to quaternary structure, tetramer of two alpha and two beta subunits.

The protein resides in the cytoplasm. It carries out the reaction tRNA(Gly) + glycine + ATP = glycyl-tRNA(Gly) + AMP + diphosphate. The chain is Glycine--tRNA ligase beta subunit from Photorhabdus laumondii subsp. laumondii (strain DSM 15139 / CIP 105565 / TT01) (Photorhabdus luminescens subsp. laumondii).